The chain runs to 150 residues: UPF0178 protein Reut_B5138 (150 aa).

It belongs to the UPF0178 family.

The polypeptide is UPF0178 protein Reut_B5138 (Cupriavidus pinatubonensis (strain JMP 134 / LMG 1197) (Cupriavidus necator (strain JMP 134))).